The following is a 177-amino-acid chain: Large ribosomal subunit protein uL6 (177 aa).

Belongs to the universal ribosomal protein uL6 family. Part of the 50S ribosomal subunit.

In terms of biological role, this protein binds to the 23S rRNA, and is important in its secondary structure. It is located near the subunit interface in the base of the L7/L12 stalk, and near the tRNA binding site of the peptidyltransferase center. The protein is Large ribosomal subunit protein uL6 of Ectopseudomonas mendocina (strain ymp) (Pseudomonas mendocina).